A 254-amino-acid polypeptide reads, in one-letter code: Type III pantothenate kinase (254 aa).

6–13 (DVGNSNIV) is a binding site for ATP. Substrate is bound by residues Tyr-100 and 107–110 (GADR). Asp-109 acts as the Proton acceptor in catalysis. Residue Asp-129 coordinates K(+). Thr-132 contributes to the ATP binding site. Substrate is bound at residue Thr-184.

This sequence belongs to the type III pantothenate kinase family. As to quaternary structure, homodimer. It depends on NH4(+) as a cofactor. Requires K(+) as cofactor.

The protein resides in the cytoplasm. The enzyme catalyses (R)-pantothenate + ATP = (R)-4'-phosphopantothenate + ADP + H(+). Its pathway is cofactor biosynthesis; coenzyme A biosynthesis; CoA from (R)-pantothenate: step 1/5. Functionally, catalyzes the phosphorylation of pantothenate (Pan), the first step in CoA biosynthesis. This Geobacter sp. (strain M21) protein is Type III pantothenate kinase.